The following is a 103-amino-acid chain: MAKSQDGVAIRHYDVVLGPHITEKSTMVSEFNAVVFKVAADATKPAIKEAVEALFGVSVKSVNTVITKGKTKKWKGRPYRRSDVKKAIVTLAEGQSIDVTTGV.

This sequence belongs to the universal ribosomal protein uL23 family. Part of the 50S ribosomal subunit. Contacts protein L29, and trigger factor when it is bound to the ribosome.

Functionally, one of the early assembly proteins it binds 23S rRNA. One of the proteins that surrounds the polypeptide exit tunnel on the outside of the ribosome. Forms the main docking site for trigger factor binding to the ribosome. The protein is Large ribosomal subunit protein uL23 of Zymomonas mobilis subsp. mobilis (strain ATCC 31821 / ZM4 / CP4).